The primary structure comprises 157 residues: Transcription elongation factor GreA (157 aa).

This sequence belongs to the GreA/GreB family.

Necessary for efficient RNA polymerase transcription elongation past template-encoded arresting sites. The arresting sites in DNA have the property of trapping a certain fraction of elongating RNA polymerases that pass through, resulting in locked ternary complexes. Cleavage of the nascent transcript by cleavage factors such as GreA or GreB allows the resumption of elongation from the new 3'terminus. GreA releases sequences of 2 to 3 nucleotides. The protein is Transcription elongation factor GreA of Azorhizobium caulinodans (strain ATCC 43989 / DSM 5975 / JCM 20966 / LMG 6465 / NBRC 14845 / NCIMB 13405 / ORS 571).